Reading from the N-terminus, the 555-residue chain is Glycerol dehydratase large subunit (555 aa).

Belongs to the diol/glycerol dehydratase large subunit family. As to quaternary structure, probably consists of three subunits: large, medium, and small. It depends on adenosylcob(III)alamin as a cofactor.

The enzyme catalyses glycerol = 3-hydroxypropanal + H2O. This Citrobacter freundii protein is Glycerol dehydratase large subunit (dhaB).